A 66-amino-acid polypeptide reads, in one-letter code: Early E3 7.7 kDa protein (66 aa).

Asn-7 and Asn-24 each carry an N-linked (GlcNAc...) asparagine; by host glycan. The helical transmembrane segment at Ile-44–Ser-64 threads the bilayer.

Its subcellular location is the host nucleus membrane. The sequence is that of Early E3 7.7 kDa protein from Human adenovirus B serotype 7 (HAdV-7).